The sequence spans 357 residues: Alternative oxidase, mitochondrial (357 aa).

The helical transmembrane segment at 152–172 (LTRCIFLESIAGVPGAVASFI) threads the bilayer. E159, E198, and H201 together coordinate Fe cation. Residues 218–238 (IIYVGQGVFCNLFFLFYLANP) traverse the membrane as a helical segment. E249, E304, and H307 together coordinate Fe cation. Residues 330–357 (IPDLKEPQPESGLKVTKPHGWEKEELKL) form a disordered region. Residues 348-357 (HGWEKEELKL) are compositionally biased toward basic and acidic residues.

The protein belongs to the alternative oxidase family. The cofactor is Fe cation.

It is found in the mitochondrion inner membrane. Catalyzes cyanide-resistant oxygen consumption. May increase respiration when the cytochrome respiratory pathway is restricted, or in response to low temperatures. The polypeptide is Alternative oxidase, mitochondrial (STO1) (Scheffersomyces stipitis (strain ATCC 58785 / CBS 6054 / NBRC 10063 / NRRL Y-11545) (Yeast)).